The chain runs to 339 residues: Anthranilate phosphoribosyltransferase (339 aa).

Residues glycine 79, 82–83 (GD), serine 87, 89–92 (NIST), 107–115 (KHGNRSISS), and serine 119 contribute to the 5-phospho-alpha-D-ribose 1-diphosphate site. Anthranilate is bound at residue glycine 79. Serine 91 is a Mg(2+) binding site. Asparagine 110 serves as a coordination point for anthranilate. Arginine 165 is a binding site for anthranilate. Mg(2+) is bound by residues aspartate 224 and glutamate 225.

Belongs to the anthranilate phosphoribosyltransferase family. Homodimer. Requires Mg(2+) as cofactor.

It carries out the reaction N-(5-phospho-beta-D-ribosyl)anthranilate + diphosphate = 5-phospho-alpha-D-ribose 1-diphosphate + anthranilate. Its pathway is amino-acid biosynthesis; L-tryptophan biosynthesis; L-tryptophan from chorismate: step 2/5. Its function is as follows. Catalyzes the transfer of the phosphoribosyl group of 5-phosphorylribose-1-pyrophosphate (PRPP) to anthranilate to yield N-(5'-phosphoribosyl)-anthranilate (PRA). The chain is Anthranilate phosphoribosyltransferase from Listeria monocytogenes serovar 1/2a (strain ATCC BAA-679 / EGD-e).